We begin with the raw amino-acid sequence, 290 residues long: Phosphatidylserine decarboxylase proenzyme (290 aa).

Active-site charge relay system; for autoendoproteolytic cleavage activity residues include Asp-96, His-153, and Ser-257. Catalysis depends on Ser-257, which acts as the Schiff-base intermediate with substrate; via pyruvic acid; for decarboxylase activity. Ser-257 bears the Pyruvic acid (Ser); by autocatalysis mark.

This sequence belongs to the phosphatidylserine decarboxylase family. PSD-B subfamily. Prokaryotic type I sub-subfamily. In terms of assembly, heterodimer of a large membrane-associated beta subunit and a small pyruvoyl-containing alpha subunit. Pyruvate serves as cofactor. Post-translationally, is synthesized initially as an inactive proenzyme. Formation of the active enzyme involves a self-maturation process in which the active site pyruvoyl group is generated from an internal serine residue via an autocatalytic post-translational modification. Two non-identical subunits are generated from the proenzyme in this reaction, and the pyruvate is formed at the N-terminus of the alpha chain, which is derived from the carboxyl end of the proenzyme. The autoendoproteolytic cleavage occurs by a canonical serine protease mechanism, in which the side chain hydroxyl group of the serine supplies its oxygen atom to form the C-terminus of the beta chain, while the remainder of the serine residue undergoes an oxidative deamination to produce ammonia and the pyruvoyl prosthetic group on the alpha chain. During this reaction, the Ser that is part of the protease active site of the proenzyme becomes the pyruvoyl prosthetic group, which constitutes an essential element of the active site of the mature decarboxylase.

The protein resides in the cell membrane. The enzyme catalyses a 1,2-diacyl-sn-glycero-3-phospho-L-serine + H(+) = a 1,2-diacyl-sn-glycero-3-phosphoethanolamine + CO2. Its pathway is phospholipid metabolism; phosphatidylethanolamine biosynthesis; phosphatidylethanolamine from CDP-diacylglycerol: step 2/2. In terms of biological role, catalyzes the formation of phosphatidylethanolamine (PtdEtn) from phosphatidylserine (PtdSer). The sequence is that of Phosphatidylserine decarboxylase proenzyme from Haemophilus influenzae (strain 86-028NP).